The primary structure comprises 76 residues: MARFFRRRKFCRFTAEDVKEIDFKDLNTLKAYISETGKIVPSRITGTKARYQRQLATAIKRARFLALLPYTDSHGR.

This sequence belongs to the bacterial ribosomal protein bS18 family. Part of the 30S ribosomal subunit. Forms a tight heterodimer with protein bS6.

In terms of biological role, binds as a heterodimer with protein bS6 to the central domain of the 16S rRNA, where it helps stabilize the platform of the 30S subunit. The protein is Small ribosomal subunit protein bS18 of Ectopseudomonas mendocina (strain ymp) (Pseudomonas mendocina).